The sequence spans 570 residues: Hydroxylamine reductase (570 aa).

[4Fe-4S] cluster contacts are provided by Cys-5, Cys-8, Cys-17, and Cys-23. Hybrid [4Fe-2O-2S] cluster-binding residues include His-266, Glu-290, Cys-334, Cys-425, Cys-453, Cys-478, Glu-513, and Lys-515. Cys-425 is modified (cysteine persulfide).

This sequence belongs to the HCP family. [4Fe-4S] cluster serves as cofactor. It depends on hybrid [4Fe-2O-2S] cluster as a cofactor.

The protein resides in the cytoplasm. The catalysed reaction is A + NH4(+) + H2O = hydroxylamine + AH2 + H(+). Functionally, catalyzes the reduction of hydroxylamine to form NH(3) and H(2)O. In Clostridium tetani (strain Massachusetts / E88), this protein is Hydroxylamine reductase.